The following is a 205-amino-acid chain: Ribosomal RNA small subunit methyltransferase G (205 aa).

S-adenosyl-L-methionine is bound by residues Gly73, Leu78, 124–125 (VE), and Arg138.

Belongs to the methyltransferase superfamily. RNA methyltransferase RsmG family.

It is found in the cytoplasm. The catalysed reaction is guanosine(527) in 16S rRNA + S-adenosyl-L-methionine = N(7)-methylguanosine(527) in 16S rRNA + S-adenosyl-L-homocysteine. In terms of biological role, specifically methylates the N7 position of guanine in position 527 of 16S rRNA. The polypeptide is Ribosomal RNA small subunit methyltransferase G (Actinobacillus pleuropneumoniae serotype 5b (strain L20)).